The primary structure comprises 734 residues: Cell surface glycoprotein gp138B (734 aa).

The first 20 residues, 1–20, serve as a signal peptide directing secretion; that stretch reads MKIILTLSIFLICFLQLGQS. 16 N-linked (GlcNAc...) asparagine glycosylation sites follow: asparagine 58, asparagine 89, asparagine 124, asparagine 198, asparagine 224, asparagine 392, asparagine 420, asparagine 435, asparagine 482, asparagine 498, asparagine 523, asparagine 596, asparagine 605, asparagine 614, asparagine 621, and asparagine 630. The IPT/TIG domain maps to 504-592; sequence PFIKSYGFLE…SSNEVTFYYF (89 aa). The interval 678 to 712 is disordered; sequence GETPTPSTTPSTTPSTTPSTTPSSTPTQSPGDDGS. A compositionally biased stretch (low complexity) spans 680-712; sequence TPTPSTTPSTTPSTTPSTTPSSTPTQSPGDDGS. 4 repeat units span residues 683 to 686, 687 to 690, 691 to 694, and 695 to 698. A 4 X 4 AA tandem repeats of P-S-T-T region spans residues 683 to 698; that stretch reads PSTTPSTTPSTTPSTT. Glycine 708 carries the GPI-like-anchor amidated glycine lipid modification. Residues 709–734 constitute a propeptide, removed in mature form; sequence DDGSTSSTLSISFYLITLLLLTQQFI.

The sugar chains may play important roles in cell fusion. Post-translationally, the GPI-like-anchor contains a phosphoceramide group, rather than a phosphatidyl group.

It is found in the cell membrane. In terms of biological role, involved in the sexual cell fusion of D.discoideum. The protein is Cell surface glycoprotein gp138B (GP138B) of Dictyostelium discoideum (Social amoeba).